The primary structure comprises 195 residues: Holliday junction branch migration complex subunit RuvA (195 aa).

The tract at residues 1 to 66 (MNYLVFKVIY…LIIKDLYGFR (66 aa)) is domain I. The interval 67-141 (TYNERLLFID…KYINKVSEKN (75 aa)) is domain II. Residue Asn-141 is a region of interest, flexible linker. Positions 141–195 (NPWAKELSIGLENLGYDKKDIEYAITKVKVDTQQNIDISEIIGCAIKEISLRHEN) are domain III.

This sequence belongs to the RuvA family. Homotetramer. Forms an RuvA(8)-RuvB(12)-Holliday junction (HJ) complex. HJ DNA is sandwiched between 2 RuvA tetramers; dsDNA enters through RuvA and exits via RuvB. An RuvB hexamer assembles on each DNA strand where it exits the tetramer. Each RuvB hexamer is contacted by two RuvA subunits (via domain III) on 2 adjacent RuvB subunits; this complex drives branch migration. In the full resolvosome a probable DNA-RuvA(4)-RuvB(12)-RuvC(2) complex forms which resolves the HJ.

Its subcellular location is the cytoplasm. Its function is as follows. The RuvA-RuvB-RuvC complex processes Holliday junction (HJ) DNA during genetic recombination and DNA repair, while the RuvA-RuvB complex plays an important role in the rescue of blocked DNA replication forks via replication fork reversal (RFR). RuvA specifically binds to HJ cruciform DNA, conferring on it an open structure. The RuvB hexamer acts as an ATP-dependent pump, pulling dsDNA into and through the RuvAB complex. HJ branch migration allows RuvC to scan DNA until it finds its consensus sequence, where it cleaves and resolves the cruciform DNA. The sequence is that of Holliday junction branch migration complex subunit RuvA from Ureaplasma urealyticum serovar 10 (strain ATCC 33699 / Western).